Reading from the N-terminus, the 641-residue chain is RING finger containing E3 ubiquitin-protein ligase WSV403 (641 aa).

An RING-type; atypical zinc finger spans residues 329–371 (CVGCLYDIEDEKRCYKLPCGHFMHTFCLSNKCSKANFRCVKCF).

The catalysed reaction is S-ubiquitinyl-[E2 ubiquitin-conjugating enzyme]-L-cysteine + [acceptor protein]-L-lysine = [E2 ubiquitin-conjugating enzyme]-L-cysteine + N(6)-ubiquitinyl-[acceptor protein]-L-lysine.. It participates in protein modification; protein ubiquitination. Probable E3 ubiquitin-protein ligase which accepts ubiquitin from an E2 ubiquitin-conjugating enzyme in the form of a thioester and then directly transfers the ubiquitin to targeted substrates. The protein is RING finger containing E3 ubiquitin-protein ligase WSV403 of White spot syndrome virus (isolate Shrimp/China/Tongan/1996) (WSSV).